Here is a 358-residue protein sequence, read N- to C-terminus: 3-isopropylmalate dehydrogenase (358 aa).

77 to 90 (GPKWTNLPPDQQPE) provides a ligand contact to NAD(+). Substrate-binding residues include Arg-98, Arg-108, Arg-137, and Asp-226. Asp-226, Asp-250, and Asp-254 together coordinate Mg(2+). 284–296 (GSAPDIAGKGIAN) contacts NAD(+).

It belongs to the isocitrate and isopropylmalate dehydrogenases family. LeuB type 1 subfamily. Homodimer. Requires Mg(2+) as cofactor. Mn(2+) serves as cofactor.

It localises to the cytoplasm. The enzyme catalyses (2R,3S)-3-isopropylmalate + NAD(+) = 4-methyl-2-oxopentanoate + CO2 + NADH. The protein operates within amino-acid biosynthesis; L-leucine biosynthesis; L-leucine from 3-methyl-2-oxobutanoate: step 3/4. Its function is as follows. Catalyzes the oxidation of 3-carboxy-2-hydroxy-4-methylpentanoate (3-isopropylmalate) to 3-carboxy-4-methyl-2-oxopentanoate. The product decarboxylates to 4-methyl-2 oxopentanoate. The protein is 3-isopropylmalate dehydrogenase (leuB) of Haemophilus influenzae (strain ATCC 51907 / DSM 11121 / KW20 / Rd).